An 86-amino-acid chain; its full sequence is Large ribosomal subunit protein bL27 (86 aa).

The interval 1–22 (MATKKAGGSSRNGRDSAGRRLG) is disordered.

It belongs to the bacterial ribosomal protein bL27 family.

This Rickettsia peacockii (strain Rustic) protein is Large ribosomal subunit protein bL27.